The primary structure comprises 383 residues: Lipid-A-disaccharide synthase (383 aa).

The protein belongs to the LpxB family.

It catalyses the reaction 2-N,3-O-bis[(3R)-3-hydroxytetradecanoyl]-alpha-D-glucosaminyl 1-phosphate + UDP-2-N,3-O-bis[(3R)-3-hydroxytetradecanoyl]-alpha-D-glucosamine = lipid A disaccharide (E. coli) + UDP + H(+). The enzyme catalyses a lipid X + a UDP-2-N,3-O-bis[(3R)-3-hydroxyacyl]-alpha-D-glucosamine = a lipid A disaccharide + UDP + H(+). The protein operates within glycolipid biosynthesis; lipid IV(A) biosynthesis; lipid IV(A) from (3R)-3-hydroxytetradecanoyl-[acyl-carrier-protein] and UDP-N-acetyl-alpha-D-glucosamine: step 5/6. Functionally, condensation of UDP-2,3-diacylglucosamine and 2,3-diacylglucosamine-1-phosphate to form lipid A disaccharide, a precursor of lipid A, a phosphorylated glycolipid that anchors the lipopolysaccharide to the outer membrane of the cell. The sequence is that of Lipid-A-disaccharide synthase from Klebsiella pneumoniae subsp. pneumoniae (strain ATCC 700721 / MGH 78578).